The primary structure comprises 222 residues: Protein GrpE (222 aa).

The protein belongs to the GrpE family. Homodimer.

Its subcellular location is the cytoplasm. Its function is as follows. Participates actively in the response to hyperosmotic and heat shock by preventing the aggregation of stress-denatured proteins, in association with DnaK and GrpE. It is the nucleotide exchange factor for DnaK and may function as a thermosensor. Unfolded proteins bind initially to DnaJ; upon interaction with the DnaJ-bound protein, DnaK hydrolyzes its bound ATP, resulting in the formation of a stable complex. GrpE releases ADP from DnaK; ATP binding to DnaK triggers the release of the substrate protein, thus completing the reaction cycle. Several rounds of ATP-dependent interactions between DnaJ, DnaK and GrpE are required for fully efficient folding. This chain is Protein GrpE, found in Bartonella bacilliformis (strain ATCC 35685 / KC583 / Herrer 020/F12,63).